A 265-amino-acid chain; its full sequence is MSESLYSIRMRSSCDERHISGAENLAPAERLHALASAMVRRALAHDKGQAEQIFLSIEKVDTADIVCHGLPDIRTIRVASVEQGRDAALSMLEKAGVNPQAARRAMATMARGAAPNGDSMRGAMLVDASTGQRLEKDRYRGVRVSRMDLDEQTSVRLKNLLQTAGLDNPHVREALVLAAKVIHAPGVIAELCWSDDPGYTAGYVAGASLGYVRFPLLKPAGEVRGGRAFFLSSDADLAQLIPYLERQVVLIDRIGRIFPDERWPA.

It belongs to the BioW family. As to quaternary structure, homodimer. The cofactor is Mg(2+).

The catalysed reaction is heptanedioate + ATP + CoA = 6-carboxyhexanoyl-CoA + AMP + diphosphate. It participates in metabolic intermediate metabolism; pimeloyl-CoA biosynthesis; pimeloyl-CoA from pimelate: step 1/1. In terms of biological role, catalyzes the transformation of pimelate into pimeloyl-CoA with concomitant hydrolysis of ATP to AMP. This is 6-carboxyhexanoate--CoA ligase from Syntrophotalea carbinolica (strain DSM 2380 / NBRC 103641 / GraBd1) (Pelobacter carbinolicus).